A 507-amino-acid chain; its full sequence is Trigger factor (507 aa).

In terms of domain architecture, PPIase FKBP-type spans 162 to 243 (GDFVSLDLSA…VRGVKEKELP (82 aa)). The disordered stretch occupies residues 434 to 507 (NLPRRPSGEA…DSELPASETK (74 aa)). Residues 442-460 (EAEDDVRDISDELDAEELE) show a composition bias toward acidic residues. Over residues 461 to 488 (VPAAAPSAEVTAAAGDEATATATATDAD) the composition is skewed to low complexity.

This sequence belongs to the FKBP-type PPIase family. Tig subfamily.

The protein localises to the cytoplasm. It catalyses the reaction [protein]-peptidylproline (omega=180) = [protein]-peptidylproline (omega=0). Involved in protein export. Acts as a chaperone by maintaining the newly synthesized protein in an open conformation. Functions as a peptidyl-prolyl cis-trans isomerase. This Parafrankia sp. (strain EAN1pec) protein is Trigger factor.